The primary structure comprises 248 residues: Pyridoxine 5'-phosphate synthase (248 aa).

Asn-10 is a 3-amino-2-oxopropyl phosphate binding site. Residue 12-13 (DH) participates in 1-deoxy-D-xylulose 5-phosphate binding. Position 21 (Arg-21) interacts with 3-amino-2-oxopropyl phosphate. His-46 (proton acceptor) is an active-site residue. Arg-48 and His-53 together coordinate 1-deoxy-D-xylulose 5-phosphate. Glu-73 (proton acceptor) is an active-site residue. Residue Thr-103 participates in 1-deoxy-D-xylulose 5-phosphate binding. The active-site Proton donor is His-194. Residues Gly-195 and 216–217 (GH) contribute to the 3-amino-2-oxopropyl phosphate site.

Belongs to the PNP synthase family. Homooctamer; tetramer of dimers.

It is found in the cytoplasm. It carries out the reaction 3-amino-2-oxopropyl phosphate + 1-deoxy-D-xylulose 5-phosphate = pyridoxine 5'-phosphate + phosphate + 2 H2O + H(+). It participates in cofactor biosynthesis; pyridoxine 5'-phosphate biosynthesis; pyridoxine 5'-phosphate from D-erythrose 4-phosphate: step 5/5. In terms of biological role, catalyzes the complicated ring closure reaction between the two acyclic compounds 1-deoxy-D-xylulose-5-phosphate (DXP) and 3-amino-2-oxopropyl phosphate (1-amino-acetone-3-phosphate or AAP) to form pyridoxine 5'-phosphate (PNP) and inorganic phosphate. The protein is Pyridoxine 5'-phosphate synthase of Legionella pneumophila (strain Corby).